The chain runs to 244 residues: Cell adhesion molecule CEACAM4 (244 aa).

The signal sequence occupies residues 1-35 (MGPPSAAPRGGHRPWQGLLITASLLTFWHPPTTVQ). Positions 36–139 (FTIEALPSSA…DSDQATGQLH (104 aa)) constitute an Ig-like V-type domain. Topologically, residues 36 to 155 (FTIEALPSSA…PGLPVGAVAG (120 aa)) are extracellular. N-linked (GlcNAc...) asparagine glycosylation is found at Asn57, Asn104, Asn111, and Asn126. The chain crosses the membrane as a helical span at residues 156-176 (IVTGVLVGVALVAALVCFLLL). Residues 177-244 (SRTGRASIQR…QIDHKADVVS (68 aa)) lie on the Cytoplasmic side of the membrane. The disordered stretch occupies residues 186-215 (RDLREQPPPASTPGHGPSHRSTFSAPLPSP). Positions 222 to 236 (YEELLYSDANIYCQI) match the ITAM motif.

The protein belongs to the immunoglobulin superfamily. CEA family. As to quaternary structure, interacts through its phosphorylated ITAM domain with the SH2 domain-containing cytoplasmic proteins involved in signaling processes during phagocytosis. In terms of processing, N-glycosylated. The cytoplasmic ITAM-like sequence becomes tyrosine phosphorylated by SRC family PTKs upon ligand-mediated receptor clustering and allows to initiate phagocytosis of bound ligand. As to expression, granulocytes.

The protein resides in the membrane. In terms of biological role, granulocyte orphan receptor that acts as an trigger efficient phagocytosis of attached particles. This Homo sapiens (Human) protein is Cell adhesion molecule CEACAM4.